The following is a 298-amino-acid chain: ADP/ATP translocase 1 (298 aa).

The Mitochondrial intermembrane portion of the chain corresponds to 1-7 (MGDQALS). N-acetylglycine is present on G2. Residues 6-98 (LSFLKDFLAG…FAFKDKYKQI (93 aa)) form a Solcar 1 repeat. S7 carries the post-translational modification Phosphoserine. Residues 8 to 37 (FLKDFLAGGIAAAVSKTAVAPIERVKLLLQ) form a helical membrane-spanning segment. The Mitochondrial matrix portion of the chain corresponds to 38–74 (VQHASKQISAEKQYKGIIDCVVRIPKEQGFLSFWRGN). K52 carries the post-translational modification N6,N6,N6-trimethyllysine. A helical transmembrane segment spans residues 75 to 99 (LANVIRYFPTQALNFAFKDKYKQIF). ADP contacts are provided by R80 and K92. Residues 100–109 (LGGVDRHKQF) are Mitochondrial intermembrane-facing. A helical membrane pass occupies residues 110-130 (WRYFAGNLASGGAAGATSLCF). Solcar repeat units lie at residues 111–201 (RYFA…AKGM) and 212–297 (VSWM…IKKY). At 131–178 (VYPLDFARTRLAADVGKGSSQREFNGLGDCLTKIFKSDGLKGLYQGFS) the chain is on the mitochondrial matrix side. K147 carries the post-translational modification N6-succinyllysine. S149 and S150 each carry phosphoserine. C160 is subject to S-nitrosocysteine. Residues 179-199 (VSVQGIIIYRAAYFGVYDTAK) form a helical membrane-spanning segment. Residues 200 to 210 (GMLPDPKNVHI) are Mitochondrial intermembrane-facing. The chain crosses the membrane as a helical span at residues 211 to 231 (IVSWMIAQSVTAVAGLVSYPF). Residues 232 to 273 (DTVRRRMMMQSGRKGADIMYTGTVDCWRKIAKDEGRKAFFKG) lie on the Mitochondrial matrix side of the membrane. R235 serves as a coordination point for ADP. The segment at 235–240 (RRRMMM) is important for transport activity. Positions 235-240 (RRRMMM) match the Nucleotide carrier signature motif motif. An N6-succinyllysine mark is found at K245 and K272. The chain crosses the membrane as a helical span at residues 274–291 (AWSNVLRGMGGAFVLVLY). Topologically, residues 292–298 (DEIKKYV) are mitochondrial intermembrane.

This sequence belongs to the mitochondrial carrier (TC 2.A.29) family. In terms of assembly, monomer. Found in a complex with ARL2, ARL2BP and SLC25A4/ANT1. Interacts with ARL2BP. Interacts with TIMM44; leading to inhibit the presequence translocase TIMM23, thereby promoting stabilization of PINK1. Post-translationally, under cell death induction, transglutaminated by TGM2. Transglutamination leads to formation of covalent cross-links between a glutamine and the epsilon-amino group of a lysine residue, forming polymers.

The protein localises to the mitochondrion inner membrane. It localises to the membrane. The enzyme catalyses ADP(in) + ATP(out) = ADP(out) + ATP(in). It catalyses the reaction H(+)(in) = H(+)(out). Its activity is regulated as follows. The matrix-open state (m-state) is inhibited by the membrane-permeable bongkrekic acid (BKA). The cytoplasmic-open state (c-state) is inhibited by the membrane-impermeable toxic inhibitor carboxyatractyloside (CATR). Proton transporter activity is inhibited by ADP:ATP antiporter activity. Its function is as follows. ADP:ATP antiporter that mediates import of ADP into the mitochondrial matrix for ATP synthesis, and export of ATP out to fuel the cell. Cycles between the cytoplasmic-open state (c-state) and the matrix-open state (m-state): operates by the alternating access mechanism with a single substrate-binding site intermittently exposed to either the cytosolic (c-state) or matrix (m-state) side of the inner mitochondrial membrane. In addition to its ADP:ATP antiporter activity, also involved in mitochondrial uncoupling and mitochondrial permeability transition pore (mPTP) activity. Plays a role in mitochondrial uncoupling by acting as a proton transporter: proton transport uncouples the proton flows via the electron transport chain and ATP synthase to reduce the efficiency of ATP production and cause mitochondrial thermogenesis. Proton transporter activity is inhibited by ADP:ATP antiporter activity, suggesting that SLC25A4/ANT1 acts as a master regulator of mitochondrial energy output by maintaining a delicate balance between ATP production (ADP:ATP antiporter activity) and thermogenesis (proton transporter activity). Proton transporter activity requires free fatty acids as cofactor, but does not transport it. Also plays a key role in mPTP opening, a non-specific pore that enables free passage of the mitochondrial membranes to solutes of up to 1.5 kDa, and which contributes to cell death. It is however unclear if SLC25A4/ANT1 constitutes a pore-forming component of mPTP or regulates it. Acts as a regulator of mitophagy independently of ADP:ATP antiporter activity: promotes mitophagy via interaction with TIMM44, leading to inhibit the presequence translocase TIMM23, thereby promoting stabilization of PINK1. The chain is ADP/ATP translocase 1 from Rattus norvegicus (Rat).